A 197-amino-acid chain; its full sequence is MIKLEQLVLASHNAGKLKELQAMLGASVKVRSIGEFSQVEPEETGLSFVENAILKARNAARLSGLPALADDSGLAVDFLGGAPGIYSARYADGRGDAANNAKLLEAMKDVPDAERGAQFVSVLALVRHADDPLPILCEGIWEGRILREARGAHGFGYDPLFWVPERDCSSAELAPEEKNRLSHRARAMALLKQRLGL.

11–16 (SHNAGK) serves as a coordination point for substrate. Mg(2+) contacts are provided by E42 and D71. The Proton acceptor role is filled by D71. Substrate contacts are provided by residues S72, 155 to 158 (FGYD), K178, and 183 to 184 (HR).

It belongs to the HAM1 NTPase family. Homodimer. Requires Mg(2+) as cofactor.

It catalyses the reaction XTP + H2O = XMP + diphosphate + H(+). It carries out the reaction dITP + H2O = dIMP + diphosphate + H(+). The enzyme catalyses ITP + H2O = IMP + diphosphate + H(+). Pyrophosphatase that catalyzes the hydrolysis of nucleoside triphosphates to their monophosphate derivatives, with a high preference for the non-canonical purine nucleotides XTP (xanthosine triphosphate), dITP (deoxyinosine triphosphate) and ITP. Seems to function as a house-cleaning enzyme that removes non-canonical purine nucleotides from the nucleotide pool, thus preventing their incorporation into DNA/RNA and avoiding chromosomal lesions. This is dITP/XTP pyrophosphatase from Pseudomonas aeruginosa (strain ATCC 15692 / DSM 22644 / CIP 104116 / JCM 14847 / LMG 12228 / 1C / PRS 101 / PAO1).